The sequence spans 566 residues: OTU domain-containing protein 5 (566 aa).

Disordered regions lie at residues 1–117 (MTIL…GDAL) and 146–175 (PGHS…GAGY). The segment covering 11–30 (PPDADPANEPPPPGPLPPAP) has biased composition (pro residues). Over residues 32 to 47 (RGGGVGVGGGGTGVGG) the composition is skewed to gly residues. Residues 63 to 75 (ASPPPQGPLPGPP) show a composition bias toward pro residues. Ser-64 is modified (phosphoserine). Positions 84–97 (AVPPGAVAGPRPQQ) are enriched in low complexity. Residues 105–115 (GPGGPGGGPGD) show a composition bias toward gly residues. Ser-165 is modified (phosphoserine). Position 175 is a phosphotyrosine (Tyr-175). Ser-177 is subject to Phosphoserine. Phosphothreonine is present on Thr-195. An OTU domain is found at 213-336 (FIIKQMKEDG…NIHYNSVVNP (124 aa)). Residues 218–224 (MKEDGAC) form a cys-loop region. The active site involves Asp-221. Residue Cys-224 is the Nucleophile of the active site. The tract at residues 273 to 283 (KRKNNCHGNHI) is variable-loop. Ser-323 carries the phosphoserine modification. The segment at 324-329 (YHRNIH) is his-loop. Residue His-329 is part of the active site. Residues Ser-332 and Ser-370 each carry the phosphoserine modification. Residues 413 to 497 (ARQVRGPSQP…PGTSSQFSAG (85 aa)) are disordered. Low complexity-rich tracts occupy residues 425 to 438 (ASAT…AASS) and 445 to 457 (SRSP…ASSP). Phosphoserine is present on Ser-447. A Phosphothreonine modification is found at Thr-502. Phosphoserine is present on Ser-503.

This sequence belongs to the peptidase C85 family. Interacts with TRAF3. Phosphorylation at Ser-177 is required for deubiquitinating activity. Phosphorylation at Ser-323, Ser-332 and Ser-503 by MTOR promotes its activity.

It is found in the nucleus. The catalysed reaction is Thiol-dependent hydrolysis of ester, thioester, amide, peptide and isopeptide bonds formed by the C-terminal Gly of ubiquitin (a 76-residue protein attached to proteins as an intracellular targeting signal).. Inhibited by N-ethyl-maleimide (NEM). In terms of biological role, deubiquitinating enzyme that functions as a negative regulator of the innate immune system. Has peptidase activity towards 'Lys-48'- and 'Lys-63'-linked polyubiquitin chains. Can also cleave 'Lys-11'-linked ubiquitin chains (in vitro). Acts via TRAF3 deubiquitination and subsequent suppression of type I interferon (IFN) production. Controls neuroectodermal differentiation through cleaving 'Lys-48'-linked ubiquitin chains to counteract degradation of select chromatin regulators such as ARID1A, HDAC2 and HCF1. Acts as a positive regulator of mTORC1 and mTORC2 signaling following phosphorylation by MTOR: acts by mediating deubiquitination of BTRC, leading to its stability. The sequence is that of OTU domain-containing protein 5 from Rattus norvegicus (Rat).